Consider the following 478-residue polypeptide: Proline--tRNA ligase (478 aa).

The protein belongs to the class-II aminoacyl-tRNA synthetase family. ProS type 3 subfamily. In terms of assembly, homodimer.

The protein localises to the cytoplasm. The catalysed reaction is tRNA(Pro) + L-proline + ATP = L-prolyl-tRNA(Pro) + AMP + diphosphate. Functionally, catalyzes the attachment of proline to tRNA(Pro) in a two-step reaction: proline is first activated by ATP to form Pro-AMP and then transferred to the acceptor end of tRNA(Pro). The protein is Proline--tRNA ligase of Methanoregula boonei (strain DSM 21154 / JCM 14090 / 6A8).